Reading from the N-terminus, the 270-residue chain is GTP cyclohydrolase FolE2 (270 aa).

This sequence belongs to the GTP cyclohydrolase IV family.

It carries out the reaction GTP + H2O = 7,8-dihydroneopterin 3'-triphosphate + formate + H(+). It participates in cofactor biosynthesis; 7,8-dihydroneopterin triphosphate biosynthesis; 7,8-dihydroneopterin triphosphate from GTP: step 1/1. In terms of biological role, converts GTP to 7,8-dihydroneopterin triphosphate. The polypeptide is GTP cyclohydrolase FolE2 (Cupriavidus pinatubonensis (strain JMP 134 / LMG 1197) (Cupriavidus necator (strain JMP 134))).